The sequence spans 273 residues: Hydroxynaphthalene reductase arp2 (273 aa).

NADP(+) contacts are provided by isoleucine 24, aspartate 70, asparagine 97, and arginine 130. Catalysis depends on proton donor residues serine 146 and serine 147. Residues tyrosine 160, lysine 164, valine 193, and serine 195 each coordinate NADP(+). The active-site Proton acceptor is tyrosine 160. Lysine 164 (lowers pKa of active site Tyr) is an active-site residue.

Belongs to the short-chain dehydrogenases/reductases (SDR) family.

It is found in the endosome. Its pathway is pigment biosynthesis; melanin biosynthesis. With respect to regulation, tricyclazole and pyroquilon inhibit arp2 hydroxynaphtalene reductase activity. Functionally, hydroxynaphthalene reductase; part of the gene cluster that mediates the biosynthesis of dihydroxynaphthalene (DHN)-melanin, a bluish-green pigment and a structural component of the conidial wall. The first step of the pathway is the production of the heptaketide naphtopyrone YWA1 by the polyketide synthase alb1 though condensation of acetyl-CoA with malonyl-CoA. The naphtopyrone YWA1 is then converted to the pentaketide 1,3,6,8-tetrahydroxynaphthalene (1,3,6,8-THN) by the heptaketide hydrolyase ayg1 though chain-length shortening. 1,3,6,8-THN is substrate of the hydroxynaphthalene reductase arp2 to yield scytalone. The scytalone dehydratase arp1 then reduces scytalone to 1,3,8-THN. 1,3,8-THN is also substrate of the hydroxynaphthalene reductase arp2 to yield vermelone. Vermelone is further converted by the multicopper oxidase abr1 to 1,8-DHN. Finally the laccase abr2 transforms 1,8-DHN to DHN-melanin. DHN-melanin biosynthesis appears to be initiated in endosomes where early enzymes (abl1, ayg1, arp1 and arp2) localize, with exocytosis leading to melanin deposition on the cell surface where late enzymes (abr1 and abr2) localize. DHN-melanin is an important structural component of the outer cell wall and is required for the presence of conidial surface hydrophobins. DHN-melanin also plays a crucial role in fungal virulence, including a protective role against the host's immune defenses. DHN-melanin also protects conidia against amoeba predation. The polypeptide is Hydroxynaphthalene reductase arp2 (Aspergillus fumigatus (strain ATCC MYA-4609 / CBS 101355 / FGSC A1100 / Af293) (Neosartorya fumigata)).